The following is a 427-amino-acid chain: Ribosomal protein uS12 methylthiotransferase RimO (427 aa).

Residues methionine 1 to valine 116 form the MTTase N-terminal domain. [4Fe-4S] cluster contacts are provided by cysteine 10, cysteine 46, cysteine 79, cysteine 145, cysteine 149, and cysteine 152. A Radical SAM core domain is found at valine 131–glutamate 360. The TRAM domain maps to glutamate 363 to glutamate 426.

The protein belongs to the methylthiotransferase family. RimO subfamily. The cofactor is [4Fe-4S] cluster.

Its subcellular location is the cytoplasm. It carries out the reaction L-aspartate(89)-[ribosomal protein uS12]-hydrogen + (sulfur carrier)-SH + AH2 + 2 S-adenosyl-L-methionine = 3-methylsulfanyl-L-aspartate(89)-[ribosomal protein uS12]-hydrogen + (sulfur carrier)-H + 5'-deoxyadenosine + L-methionine + A + S-adenosyl-L-homocysteine + 2 H(+). Functionally, catalyzes the methylthiolation of an aspartic acid residue of ribosomal protein uS12. The polypeptide is Ribosomal protein uS12 methylthiotransferase RimO (Thermosipho melanesiensis (strain DSM 12029 / CIP 104789 / BI429)).